A 311-amino-acid chain; its full sequence is Lipoyl synthase (311 aa).

Positions 47, 52, 58, 73, 77, 80, and 286 each coordinate [4Fe-4S] cluster. One can recognise a Radical SAM core domain in the interval tryptophan 59–phenylalanine 276.

The protein belongs to the radical SAM superfamily. Lipoyl synthase family. Requires [4Fe-4S] cluster as cofactor.

It is found in the cytoplasm. It carries out the reaction [[Fe-S] cluster scaffold protein carrying a second [4Fe-4S](2+) cluster] + N(6)-octanoyl-L-lysyl-[protein] + 2 oxidized [2Fe-2S]-[ferredoxin] + 2 S-adenosyl-L-methionine + 4 H(+) = [[Fe-S] cluster scaffold protein] + N(6)-[(R)-dihydrolipoyl]-L-lysyl-[protein] + 4 Fe(3+) + 2 hydrogen sulfide + 2 5'-deoxyadenosine + 2 L-methionine + 2 reduced [2Fe-2S]-[ferredoxin]. It functions in the pathway protein modification; protein lipoylation via endogenous pathway; protein N(6)-(lipoyl)lysine from octanoyl-[acyl-carrier-protein]: step 2/2. Its function is as follows. Catalyzes the radical-mediated insertion of two sulfur atoms into the C-6 and C-8 positions of the octanoyl moiety bound to the lipoyl domains of lipoate-dependent enzymes, thereby converting the octanoylated domains into lipoylated derivatives. The protein is Lipoyl synthase of Chlamydia trachomatis serovar D (strain ATCC VR-885 / DSM 19411 / UW-3/Cx).